A 144-amino-acid polypeptide reads, in one-letter code: Prefoldin subunit alpha (144 aa).

Belongs to the prefoldin alpha subunit family. Heterohexamer of two alpha and four beta subunits.

It is found in the cytoplasm. Molecular chaperone capable of stabilizing a range of proteins. Seems to fulfill an ATP-independent, HSP70-like function in archaeal de novo protein folding. The chain is Prefoldin subunit alpha from Methanococcus maripaludis (strain C7 / ATCC BAA-1331).